The sequence spans 310 residues: Acetyl-coenzyme A carboxylase carboxyl transferase subunit beta, chloroplastic (310 aa).

A CoA carboxyltransferase N-terminal domain is found at Leu47 to Asn310. Zn(2+) is bound by residues Cys51, Cys54, Cys70, and Cys73. Residues Cys51–Cys73 form a C4-type zinc finger.

It belongs to the AccD/PCCB family. As to quaternary structure, acetyl-CoA carboxylase is a heterohexamer composed of biotin carboxyl carrier protein, biotin carboxylase and 2 subunits each of ACCase subunit alpha and ACCase plastid-coded subunit beta (accD). Zn(2+) serves as cofactor.

It is found in the plastid. The protein resides in the chloroplast stroma. The catalysed reaction is N(6)-carboxybiotinyl-L-lysyl-[protein] + acetyl-CoA = N(6)-biotinyl-L-lysyl-[protein] + malonyl-CoA. The protein operates within lipid metabolism; malonyl-CoA biosynthesis; malonyl-CoA from acetyl-CoA: step 1/1. In terms of biological role, component of the acetyl coenzyme A carboxylase (ACC) complex. Biotin carboxylase (BC) catalyzes the carboxylation of biotin on its carrier protein (BCCP) and then the CO(2) group is transferred by the transcarboxylase to acetyl-CoA to form malonyl-CoA. In Adiantum capillus-veneris (Maidenhair fern), this protein is Acetyl-coenzyme A carboxylase carboxyl transferase subunit beta, chloroplastic.